Here is a 474-residue protein sequence, read N- to C-terminus: Probable protein phosphatase 2C 37 (474 aa).

The tract at residues 1–90 is disordered; it reads MVMASAGVNM…RDDDGCSSTA (90 aa). Positions 57 to 77 are enriched in low complexity; the sequence is LPASSASPSPSPTSSAASSDC. The PPM-type phosphatase domain maps to 113-470; sequence AFGSVSLAGR…DNISVVVIDL (358 aa). Positions 152, 153, and 387 each coordinate Mn(2+). Positions 406-434 are disordered; it reads LEDGSPTSGRRAARSGEAASSSAGAPAAA. Positions 420–434 are enriched in low complexity; it reads SGEAASSSAGAPAAA. Aspartate 461 serves as a coordination point for Mn(2+).

It belongs to the PP2C family. Mg(2+) serves as cofactor. The cofactor is Mn(2+).

It catalyses the reaction O-phospho-L-seryl-[protein] + H2O = L-seryl-[protein] + phosphate. The enzyme catalyses O-phospho-L-threonyl-[protein] + H2O = L-threonyl-[protein] + phosphate. This Oryza sativa subsp. japonica (Rice) protein is Probable protein phosphatase 2C 37.